Here is a 1405-residue protein sequence, read N- to C-terminus: DNA-directed RNA polymerase subunit beta' (1405 aa).

Residues Cys-70, Cys-72, Cys-85, and Cys-88 each contribute to the Zn(2+) site. Mg(2+) contacts are provided by Asp-460, Asp-462, and Asp-464. Cys-814, Cys-888, Cys-895, and Cys-898 together coordinate Zn(2+).

It belongs to the RNA polymerase beta' chain family. As to quaternary structure, the RNAP catalytic core consists of 2 alpha, 1 beta, 1 beta' and 1 omega subunit. When a sigma factor is associated with the core the holoenzyme is formed, which can initiate transcription. The cofactor is Mg(2+). Requires Zn(2+) as cofactor.

It carries out the reaction RNA(n) + a ribonucleoside 5'-triphosphate = RNA(n+1) + diphosphate. Its function is as follows. DNA-dependent RNA polymerase catalyzes the transcription of DNA into RNA using the four ribonucleoside triphosphates as substrates. This chain is DNA-directed RNA polymerase subunit beta', found in Wigglesworthia glossinidia brevipalpis.